We begin with the raw amino-acid sequence, 176 residues long: Protein MAL2 (176 aa).

Over 1–34 (MSAGGASVPPPPNPAVSFPPPRVTLPAGPDILRT) the chain is Cytoplasmic. Residues 31 to 175 (ILRTYSGAFV…SLGLALRRWR (145 aa)) form the MARVEL domain. The chain crosses the membrane as a helical span at residues 35–55 (YSGAFVCLEILFGGLVWILVA). Over 56 to 66 (SSNVPLPLLQG) the chain is Lumenal. A helical membrane pass occupies residues 67-87 (WVMFVSVTAFFFSLLFLGMFL). Over 88-102 (SGMVAQIDANWNFLD) the chain is Cytoplasmic. The helical transmembrane segment at 103-123 (FAYHFTVFVFYFGAFLLEAAA) threads the bilayer. Topologically, residues 124 to 149 (TSLHDLHCNTTITGQPLLSDNQYNIN) are lumenal. A glycan (N-linked (GlcNAc...) asparagine) is linked at Asn-132. A helical membrane pass occupies residues 150 to 170 (VAASIFAFMTTACYGCSLGLA). Topologically, residues 171–176 (LRRWRP) are cytoplasmic.

It belongs to the MAL family. As to quaternary structure, interacts with TPD52L2. In terms of tissue distribution, predominantly expressed in kidney, lung, and liver. Also found in thyroid gland, stomach and, at lower levels in testis and small intestine.

It is found in the cell membrane. Its subcellular location is the apical cell membrane. It localises to the endomembrane system. The protein localises to the cytoplasm. The protein resides in the perinuclear region. Functionally, member of the machinery of polarized transport. Required for the indirect transcytotic route at the step of the egress of the transcytosing cargo from perinuclear endosomes in order for it to travel to the apical surface via a raft-dependent pathway. The polypeptide is Protein MAL2 (MAL2) (Homo sapiens (Human)).